A 410-amino-acid polypeptide reads, in one-letter code: Metacaspase-1B (410 aa).

The disordered stretch occupies residues 1–106 (MYHRNSAPPP…SFGKGAPSNY (106 aa)). Pro residues-rich tracts occupy residues 7–23 (APPP…PQSQ) and 32–52 (PPYP…PPPT). Residues His-201 and Cys-257 contribute to the active site.

This sequence belongs to the peptidase C14B family.

Its function is as follows. Involved in cell death (apoptosis). The sequence is that of Metacaspase-1B (casB) from Aspergillus clavatus (strain ATCC 1007 / CBS 513.65 / DSM 816 / NCTC 3887 / NRRL 1 / QM 1276 / 107).